The primary structure comprises 91 residues: Putative antitoxin YutD (91 aa).

A disulfide bridge connects residues C77 and C81.

In terms of assembly, homodimer, probably forms a complex with cognate toxin YutE.

Its function is as follows. Probable antitoxin component of a putative type VII toxin-antitoxin (TA) system. Probably neutralizes cognate toxin YutE. In Bacillus subtilis (strain 168), this protein is Putative antitoxin YutD (yutD).